We begin with the raw amino-acid sequence, 115 residues long: Protein SPIRAL1-like 2 (115 aa).

The disordered stretch occupies residues 29–48 (AKAKPAAAAEKETTPAPVKK).

Belongs to the SPIRAL1 family.

Functionally, acts in maintaining the cortical microtubules organization essential for anisotropic cell growth. The polypeptide is Protein SPIRAL1-like 2 (Oryza sativa subsp. japonica (Rice)).